The primary structure comprises 397 residues: CCA-adding enzyme (397 aa).

Positions 26 and 29 each coordinate ATP. Residues glycine 26 and arginine 29 each coordinate CTP. The Mg(2+) site is built by aspartate 39 and aspartate 41. Arginine 110, aspartate 153, arginine 156, arginine 159, and arginine 162 together coordinate ATP. CTP contacts are provided by arginine 110, aspartate 153, arginine 156, arginine 159, and arginine 162.

This sequence belongs to the tRNA nucleotidyltransferase/poly(A) polymerase family. Bacterial CCA-adding enzyme type 3 subfamily. In terms of assembly, homodimer. The cofactor is Mg(2+).

The enzyme catalyses a tRNA precursor + 2 CTP + ATP = a tRNA with a 3' CCA end + 3 diphosphate. The catalysed reaction is a tRNA with a 3' CCA end + 2 CTP + ATP = a tRNA with a 3' CCACCA end + 3 diphosphate. Catalyzes the addition and repair of the essential 3'-terminal CCA sequence in tRNAs without using a nucleic acid template. Adds these three nucleotides in the order of C, C, and A to the tRNA nucleotide-73, using CTP and ATP as substrates and producing inorganic pyrophosphate. tRNA 3'-terminal CCA addition is required both for tRNA processing and repair. Also involved in tRNA surveillance by mediating tandem CCA addition to generate a CCACCA at the 3' terminus of unstable tRNAs. While stable tRNAs receive only 3'-terminal CCA, unstable tRNAs are marked with CCACCA and rapidly degraded. The sequence is that of CCA-adding enzyme from Bacillus cereus (strain Q1).